The following is a 733-amino-acid chain: Phosphoribosylformylglycinamidine synthase subunit PurL (733 aa).

Residue His41 is part of the active site. The ATP site is built by Tyr44 and Lys83. Mg(2+) is bound at residue Glu85. Substrate-binding positions include 86–89 (SHNH) and Arg108. The active-site Proton acceptor is His87. Asp109 serves as a coordination point for Mg(2+). The interval 212–232 (GASFASQELSEESEEKRPSVQ) is disordered. Gln232 serves as a coordination point for substrate. Mg(2+) is bound at residue Asp260. Position 304 to 306 (304 to 306 (ESQ)) interacts with substrate. Positions 488 and 525 each coordinate ATP. Position 526 (Asn526) interacts with Mg(2+). Ser528 serves as a coordination point for substrate.

The protein belongs to the FGAMS family. In terms of assembly, monomer. Part of the FGAM synthase complex composed of 1 PurL, 1 PurQ and 2 PurS subunits.

It localises to the cytoplasm. The catalysed reaction is N(2)-formyl-N(1)-(5-phospho-beta-D-ribosyl)glycinamide + L-glutamine + ATP + H2O = 2-formamido-N(1)-(5-O-phospho-beta-D-ribosyl)acetamidine + L-glutamate + ADP + phosphate + H(+). The protein operates within purine metabolism; IMP biosynthesis via de novo pathway; 5-amino-1-(5-phospho-D-ribosyl)imidazole from N(2)-formyl-N(1)-(5-phospho-D-ribosyl)glycinamide: step 1/2. Functionally, part of the phosphoribosylformylglycinamidine synthase complex involved in the purines biosynthetic pathway. Catalyzes the ATP-dependent conversion of formylglycinamide ribonucleotide (FGAR) and glutamine to yield formylglycinamidine ribonucleotide (FGAM) and glutamate. The FGAM synthase complex is composed of three subunits. PurQ produces an ammonia molecule by converting glutamine to glutamate. PurL transfers the ammonia molecule to FGAR to form FGAM in an ATP-dependent manner. PurS interacts with PurQ and PurL and is thought to assist in the transfer of the ammonia molecule from PurQ to PurL. The protein is Phosphoribosylformylglycinamidine synthase subunit PurL of Thermoanaerobacter pseudethanolicus (strain ATCC 33223 / 39E) (Clostridium thermohydrosulfuricum).